Consider the following 292-residue polypeptide: MKILVPATSANLGPGFDCLGLSLKLFNETQIQKSGVFSISIGGEGSDNIFLKKNNIFVNIFYEIYEKLSGKKDNFRFIFQNNIPLSRGLGSSSAVIVGAIASAYYMSGFKVEKERILDEALIYENHPDNIAPATLGGFVCSLVEKNKVYSIKKEIDKDLAAVVVIPNLAMSTEQSRQALAKNLSFNDAVFNLSHASFLTACFLEKKYEFLKFASQDKLHEINRMKNLPELFEVQKFALENKALMSTLSGSGSSFFSLAFKDDALALAKKMQTKFKDFCVQYLEFDDNGFEIC.

84-94 (PLSRGLGSSSA) lines the ATP pocket.

Belongs to the GHMP kinase family. Homoserine kinase subfamily.

Its subcellular location is the cytoplasm. It carries out the reaction L-homoserine + ATP = O-phospho-L-homoserine + ADP + H(+). It functions in the pathway amino-acid biosynthesis; L-threonine biosynthesis; L-threonine from L-aspartate: step 4/5. In terms of biological role, catalyzes the ATP-dependent phosphorylation of L-homoserine to L-homoserine phosphate. The sequence is that of Homoserine kinase from Campylobacter jejuni subsp. jejuni serotype O:6 (strain 81116 / NCTC 11828).